The sequence spans 163 residues: uncharacterized protein (163 aa).

Positions 101-162 (LESMKVERKP…KMGERILERE (62 aa)) form a coiled coil.

This is an uncharacterized protein from Aquifex aeolicus (strain VF5).